A 56-amino-acid polypeptide reads, in one-letter code: Large ribosomal subunit protein eL37 (56 aa).

Zn(2+)-binding residues include Cys19, Cys22, Cys34, and Cys37. A C4-type zinc finger spans residues 19–37; the sequence is CRRCGRLSYNFNRKTCVAC.

The protein belongs to the eukaryotic ribosomal protein eL37 family. Requires Zn(2+) as cofactor.

In terms of biological role, binds to the 23S rRNA. In Methanothrix thermoacetophila (strain DSM 6194 / JCM 14653 / NBRC 101360 / PT) (Methanosaeta thermophila), this protein is Large ribosomal subunit protein eL37.